Consider the following 499-residue polypeptide: Glycerol kinase (499 aa).

An ADP-binding site is contributed by threonine 14. 3 residues coordinate ATP: threonine 14, threonine 15, and serine 16. Threonine 14 is a binding site for sn-glycerol 3-phosphate. Arginine 18 is an ADP binding site. Sn-glycerol 3-phosphate contacts are provided by arginine 84, glutamate 85, tyrosine 136, and aspartate 245. Positions 84, 85, 136, 245, and 246 each coordinate glycerol. ADP-binding residues include threonine 267 and glycine 310. ATP is bound by residues threonine 267, glycine 310, glutamine 314, and glycine 411. 2 residues coordinate ADP: glycine 411 and asparagine 415.

Belongs to the FGGY kinase family.

It catalyses the reaction glycerol + ATP = sn-glycerol 3-phosphate + ADP + H(+). It participates in polyol metabolism; glycerol degradation via glycerol kinase pathway; sn-glycerol 3-phosphate from glycerol: step 1/1. Its activity is regulated as follows. Inhibited by fructose 1,6-bisphosphate (FBP). Its function is as follows. Key enzyme in the regulation of glycerol uptake and metabolism. Catalyzes the phosphorylation of glycerol to yield sn-glycerol 3-phosphate. This is Glycerol kinase from Nitrosomonas eutropha (strain DSM 101675 / C91 / Nm57).